A 253-amino-acid polypeptide reads, in one-letter code: Ubiquinone/menaquinone biosynthesis C-methyltransferase UbiE (253 aa).

Residues threonine 76, aspartate 97, 125-126, and serine 142 contribute to the S-adenosyl-L-methionine site; that span reads NA.

The protein belongs to the class I-like SAM-binding methyltransferase superfamily. MenG/UbiE family.

The enzyme catalyses a 2-demethylmenaquinol + S-adenosyl-L-methionine = a menaquinol + S-adenosyl-L-homocysteine + H(+). It catalyses the reaction a 2-methoxy-6-(all-trans-polyprenyl)benzene-1,4-diol + S-adenosyl-L-methionine = a 5-methoxy-2-methyl-3-(all-trans-polyprenyl)benzene-1,4-diol + S-adenosyl-L-homocysteine + H(+). It participates in quinol/quinone metabolism; menaquinone biosynthesis; menaquinol from 1,4-dihydroxy-2-naphthoate: step 2/2. The protein operates within cofactor biosynthesis; ubiquinone biosynthesis. Its function is as follows. Methyltransferase required for the conversion of demethylmenaquinol (DMKH2) to menaquinol (MKH2) and the conversion of 2-polyprenyl-6-methoxy-1,4-benzoquinol (DDMQH2) to 2-polyprenyl-3-methyl-6-methoxy-1,4-benzoquinol (DMQH2). This Xanthomonas oryzae pv. oryzae (strain MAFF 311018) protein is Ubiquinone/menaquinone biosynthesis C-methyltransferase UbiE.